Here is a 322-residue protein sequence, read N- to C-terminus: MRDGIGKRAASALFLCGVLVMLAVSSAIVSSAMYILSFPGQASGITKEQVTKHMKKESFKQADIYYTSKEKSLLPLTKETLEYAVSINQIMIGYSNQKPIDIIFFPNEKQMEAYSGLLDVVGFYSEREQLIGLLPEEKKKLLEGDEVAVYLYQRLLIHEYSHHAFHQKLKELETDPDEFPLWFHEGLSEWIANYELLIDPITFSVVPFDRLQTDRDWQEARAEYDTDVYLQSFYMIDELTDKYGKDIISEMIKETAKKGDFEKGFKSATKESLDQFEKDFKKKFEKNSAALDSIYPMPLLLVKSLLTHSALCRRHLSLGRGE.

The first 32 residues, 1-32 (MRDGIGKRAASALFLCGVLVMLAVSSAIVSSA), serve as a signal peptide directing secretion.

This is an uncharacterized protein from Bacillus subtilis (strain 168).